An 843-amino-acid chain; its full sequence is MAEITVGQLAQQTNKEVDALLKQLKSFGIEKSSEKDTLTPTEMKTLLEKINSAKNTATRKKVTSVKLDGKHKINVSVKRKRRVAKKVEQQESTTLEQPQELETMVQEVSQQVDIVKEQDNIEQIVENKEAVKVQEQRQAEIAKPVIKDSGFKITAMPEIKIEEIVAEDDEGLAASDKQAKKKAAKKVFSEAVNTNTKYKREEEEKKSKAKKAGGKGFKKANPRQLSQLAGDLESFDEFGAKKGKLKAPKVKKQEFTKPVENTVRTVEIHEGITVSELAQKMAVKGAEIVKVLFNMGVMATINQSLDQDTAILIVEEMGHKYTLHNENALEEAVTIVDRSSYKKISRAPVVTIMGHVDHGKTSLLDYIRQTRVVAGEAGGITQHIGAYSVKTDKGSITFLDTPGHEAFTSMRARGAKSTDIVILVVAADDGVMPQTEEAIQHAKAARVPIVVAVNKIDKPEADPDKVISELAQRNVIPESWGGDVMFVNVSAKTGEGVADLLEAVLLQSEVLELEAFAEGLAEGVVIESRLEKGRGPVATVLVQNGNLKQGDNILCGTEYGRVRAMHNDLGKKIKAAGPATPVEILGLSGVPAAGDEMVVIENEKKAKELAAQRSQKQKEAKIAQEQSLKLSNMFNNMGKEGEQQVLKIILKGDVQGSVEAIRESLLKLSTDEVKVDIIASGIGAITSSDVTLAVASTAVVIGFNVRADSAAKKLAETDGVEFRYYNIIYDLIDDVKKAMSGLLSPEMKEQIIGIAEVREVYRSSKFGSIAGCMVIEGVVKRTNPIRVLRNNVVIYEGTLESLKRFKDDASEVKKGLECGIGVKNYNDVREGDQIEVFEVAKEL.

A disordered region spans residues Tyr-198–Lys-219. The span at Ser-207–Lys-219 shows a compositional bias: basic residues. Residues Ser-345–Glu-512 enclose the tr-type G domain. The segment at Gly-354–Thr-361 is G1. Residue Gly-354–Thr-361 coordinates GTP. Residues Gly-379 to His-383 form a G2 region. A G3 region spans residues Asp-400 to Gly-403. GTP-binding positions include Asp-400 to His-404 and Asn-454 to Asp-457. Residues Asn-454–Asp-457 are G4. Residues Ser-490–Lys-492 are G5.

This sequence belongs to the TRAFAC class translation factor GTPase superfamily. Classic translation factor GTPase family. IF-2 subfamily.

Its subcellular location is the cytoplasm. One of the essential components for the initiation of protein synthesis. Protects formylmethionyl-tRNA from spontaneous hydrolysis and promotes its binding to the 30S ribosomal subunits. Also involved in the hydrolysis of GTP during the formation of the 70S ribosomal complex. This chain is Translation initiation factor IF-2, found in Francisella tularensis subsp. tularensis (strain WY96-3418).